An 863-amino-acid polypeptide reads, in one-letter code: Aminopeptidase N (863 aa).

Residues glutamate 124 and 263-267 each bind substrate; that span reads GAMEN. Position 299 (histidine 299) interacts with Zn(2+). Residue glutamate 300 is the Proton acceptor of the active site. Zn(2+)-binding residues include histidine 303 and glutamate 322.

The protein belongs to the peptidase M1 family. Zn(2+) is required as a cofactor.

The enzyme catalyses Release of an N-terminal amino acid, Xaa-|-Yaa- from a peptide, amide or arylamide. Xaa is preferably Ala, but may be most amino acids including Pro (slow action). When a terminal hydrophobic residue is followed by a prolyl residue, the two may be released as an intact Xaa-Pro dipeptide.. Aminopeptidase N is involved in the degradation of intracellular peptides generated by protein breakdown during normal growth as well as in response to nutrient starvation. This is Aminopeptidase N (pepN) from Caulobacter vibrioides (strain ATCC 19089 / CIP 103742 / CB 15) (Caulobacter crescentus).